Reading from the N-terminus, the 942-residue chain is DDB1- and CUL4-associated factor 5 (942 aa).

WD repeat units lie at residues 51–91 (GHFG…HSRV), 99–139 (EHHS…LDVF), 140–180 (AHED…HGEP), 185–225 (NYPS…SSLL), 277–317 (FNSC…EAGG), and 331–370 (GHRS…GCTG). Disordered regions lie at residues 449 to 478 (GVSE…ESAD) and 490 to 509 (TTNT…AASR). Positions 454-465 (SGYTDSESSASL) are enriched in polar residues. T500 carries the phosphothreonine modification. Phosphoserine occurs at positions 531, 533, 626, 628, 645, 648, and 651. 3 disordered regions span residues 544 to 655 (TDLF…DIES), 676 to 824 (NNKD…EERS), and 889 to 942 (ACET…KLKT). Residues 625–641 (LSSSPTSSPERSTSTLE) show a composition bias toward low complexity. Composition is skewed to basic and acidic residues over residues 690-701 (DEGRAGTSHKDN) and 728-738 (CSKDTFKEETP). The span at 760–770 (GTSQDTGNSGS) shows a compositional bias: polar residues. At S794 the chain carries Phosphoserine. Residues 801 to 815 (SGSTLNSGSGNCPRT) show a composition bias toward polar residues.

As to quaternary structure, interacts with DDB1, CUL4A or CUL4B. Interacts with L3MBTL3. Interacts with DNMT1. Interacts with E2F1. Interacts with SOX2. As to expression, ubiquitous.

Its pathway is protein modification; protein ubiquitination. In terms of biological role, is a substrate receptor for the CUL4-DDB1 E3 ubiquitin-protein ligase complex (CRL4). The complex CRL4-DCAF5 is involved in the ubiquitination of a set of methylated non-histone proteins, including SOX2, DNMT1 and E2F1. The sequence is that of DDB1- and CUL4-associated factor 5 (DCAF5) from Homo sapiens (Human).